Here is a 342-residue protein sequence, read N- to C-terminus: Cathepsin B-like cysteine proteinase 2 (342 aa).

An N-terminal signal peptide occupies residues 1–18 (MKYLVLALCTYLCSQSGA). Residues 19-86 (DENAAQGIPL…VKEDPDPEVD (68 aa)) constitute a propeptide, activation peptide. N-linked (GlcNAc...) asparagine glycosylation occurs at N99. Disulfide bonds link C100-C128, C111-C156, C147-C214, C148-C152, C185-C218, and C193-C205. The active site involves C114. A glycan (N-linked (GlcNAc...) asparagine) is linked at N138. The N-linked (GlcNAc...) asparagine glycan is linked to N198. Residue H285 is part of the active site. A glycan (N-linked (GlcNAc...) asparagine) is linked at N296. N305 is a catalytic residue.

Belongs to the peptidase C1 family.

In terms of biological role, expression of the protease correlates with blood-feeding and suggests a role for the protease in blood digestion. This chain is Cathepsin B-like cysteine proteinase 2 (AC-2), found in Haemonchus contortus (Barber pole worm).